Consider the following 394-residue polypeptide: MSRIVLAEAYRTPIGVFGGVFKDIPAYELGATVIRQILEHSQIDPNEINEVILGNVLQAGQGQNPARIAAIHGGVPEAVPSFTVNKVCGSGLKAIQLAYQSIVAGDNEIVIAGGMESMSQSPMLLKNSRFGFKMGNQTLEDSMIADGLTDKFNDYHMGITAENLVEQYQISRKEQDQFAFDSQQKASRAQQAGVFDAEIVPVEVPQRKGDPLIISQDEGIRPQTTIDKLAQLRPAFKKDGSVTAGNASGINDGAAAMLVMTEDKAKALGLQPIAVLDSFGASGVAPSIMGIGPVEAIHKALKRSNKVINDVDIFELNEAFAAQSIAVNRELQLPQDKVNVNGGAIALGHPIGASGARTLVSLLHQLSDAKPTGVASLCIGGGQGIATVVSKYEV.

C88 (acyl-thioester intermediate) is an active-site residue. Residues H349 and C378 each act as proton acceptor in the active site.

Belongs to the thiolase-like superfamily. Thiolase family.

The protein localises to the cytoplasm. The catalysed reaction is 2 acetyl-CoA = acetoacetyl-CoA + CoA. The protein is Probable acetyl-CoA acyltransferase of Staphylococcus epidermidis (strain ATCC 35984 / DSM 28319 / BCRC 17069 / CCUG 31568 / BM 3577 / RP62A).